Here is a 746-residue protein sequence, read N- to C-terminus: Protein C-mannosyl-transferase DPY19L1 (746 aa).

A disordered region spans residues 1-68; it reads MVLQARSKHR…RAGTAAPAPD (68 aa). Phosphoserine is present on residues Ser28 and Ser31. Positions 59–68 are enriched in low complexity; it reads RAGTAAPAPD. 11 helical membrane-spanning segments follow: residues 137 to 159, 227 to 247, 257 to 279, 307 to 325, 331 to 350, 357 to 374, 380 to 396, 405 to 425, 481 to 501, 520 to 540, and 562 to 582; these read LYYS…WMIM, ACFY…LFFI, LGGV…VMWT, LCRG…FMLP, FVLL…GYID, IIYM…LMFG, TSYY…MLAM, VSEL…TVIL, LLLP…FNDM, GELV…VLIM, and LFGW…ILAA.

This sequence belongs to the dpy-19 family.

Its subcellular location is the endoplasmic reticulum membrane. The catalysed reaction is L-tryptophyl-[protein] + a di-trans,poly-cis-dolichyl beta-D-mannosyl phosphate = C-alpha-D-mannosyl-L-tryptophyl-[protein] + a di-trans,poly-cis-dolichyl phosphate + H(+). Its pathway is protein modification; protein glycosylation. In terms of biological role, C-mannosyltransferase that mediates the C-mannosylation tryptophan residues on target proteins. The reaction occurs on the luminal side of the endoplasmic reticulum and involves the transfer of a mannose unit from a dolichylphosphate mannose (Dol-P-Man) donor to an acceptor protein containing a WxxW consensus sequence. C-mannosylates the first two tryptophans in the WxxWxxWxxC sequence motif in thrombospondin (TSP) type-1 repeats of UNC5A. Regulates neurite extension during development. The polypeptide is Protein C-mannosyl-transferase DPY19L1 (Dpy19l1) (Mus musculus (Mouse)).